The sequence spans 377 residues: Dual-specificity RNA methyltransferase RlmN (377 aa).

Catalysis depends on Glu102, which acts as the Proton acceptor. The Radical SAM core domain maps to 108–345 (EPDRRTLCVS…AVVRKNRGGD (238 aa)). Residues Cys115 and Cys350 are joined by a disulfide bond. [4Fe-4S] cluster-binding residues include Cys122, Cys126, and Cys129. S-adenosyl-L-methionine-binding positions include 177–178 (GE), Ser209, 231–233 (SLN), and Asn307. The active-site S-methylcysteine intermediate is the Cys350. The segment at 354–377 (AAEGGPGDPRRPAPPPLTRLPAAG) is disordered.

This sequence belongs to the radical SAM superfamily. RlmN family. [4Fe-4S] cluster is required as a cofactor.

It localises to the cytoplasm. The catalysed reaction is adenosine(2503) in 23S rRNA + 2 reduced [2Fe-2S]-[ferredoxin] + 2 S-adenosyl-L-methionine = 2-methyladenosine(2503) in 23S rRNA + 5'-deoxyadenosine + L-methionine + 2 oxidized [2Fe-2S]-[ferredoxin] + S-adenosyl-L-homocysteine. It catalyses the reaction adenosine(37) in tRNA + 2 reduced [2Fe-2S]-[ferredoxin] + 2 S-adenosyl-L-methionine = 2-methyladenosine(37) in tRNA + 5'-deoxyadenosine + L-methionine + 2 oxidized [2Fe-2S]-[ferredoxin] + S-adenosyl-L-homocysteine. Specifically methylates position 2 of adenine 2503 in 23S rRNA and position 2 of adenine 37 in tRNAs. m2A2503 modification seems to play a crucial role in the proofreading step occurring at the peptidyl transferase center and thus would serve to optimize ribosomal fidelity. The protein is Dual-specificity RNA methyltransferase RlmN of Anaeromyxobacter sp. (strain Fw109-5).